The sequence spans 103 residues: L-rhamnose mutarotase (103 aa).

Tyr18 serves as a coordination point for substrate. His22 acts as the Proton donor in catalysis. Substrate is bound by residues Tyr41 and 76–77 (WW).

Belongs to the rhamnose mutarotase family. Homodimer.

Its subcellular location is the cytoplasm. The enzyme catalyses alpha-L-rhamnose = beta-L-rhamnose. It participates in carbohydrate metabolism; L-rhamnose metabolism. In terms of biological role, involved in the anomeric conversion of L-rhamnose. This Enterococcus faecalis (strain ATCC 700802 / V583) protein is L-rhamnose mutarotase.